The chain runs to 123 residues: Large ribosomal subunit protein bL12 (123 aa).

The protein belongs to the bacterial ribosomal protein bL12 family. Homodimer. Part of the ribosomal stalk of the 50S ribosomal subunit. Forms a multimeric L10(L12)X complex, where L10 forms an elongated spine to which 2 to 4 L12 dimers bind in a sequential fashion. Binds GTP-bound translation factors.

Functionally, forms part of the ribosomal stalk which helps the ribosome interact with GTP-bound translation factors. Is thus essential for accurate translation. This is Large ribosomal subunit protein bL12 from Salmonella arizonae (strain ATCC BAA-731 / CDC346-86 / RSK2980).